A 433-amino-acid chain; its full sequence is Glutamate-1-semialdehyde 2,1-aminomutase (433 aa).

Position 273 is an N6-(pyridoxal phosphate)lysine (Lys-273).

It belongs to the class-III pyridoxal-phosphate-dependent aminotransferase family. HemL subfamily. Homodimer. The cofactor is pyridoxal 5'-phosphate.

It is found in the cytoplasm. It carries out the reaction (S)-4-amino-5-oxopentanoate = 5-aminolevulinate. The protein operates within porphyrin-containing compound metabolism; protoporphyrin-IX biosynthesis; 5-aminolevulinate from L-glutamyl-tRNA(Glu): step 2/2. The protein is Glutamate-1-semialdehyde 2,1-aminomutase of Ralstonia nicotianae (strain ATCC BAA-1114 / GMI1000) (Ralstonia solanacearum).